The chain runs to 336 residues: Ketol-acid reductoisomerase (NADP(+)) (336 aa).

The KARI N-terminal Rossmann domain maps to A2–T182. NADP(+)-binding positions include Y25–Q28, S51, S53, and D83–Q86. H108 is a catalytic residue. An NADP(+)-binding site is contributed by G134. Positions T183 to T328 constitute a KARI C-terminal knotted domain. Mg(2+) is bound by residues D191, E195, E227, and E231. S252 is a binding site for substrate.

Belongs to the ketol-acid reductoisomerase family. The cofactor is Mg(2+).

It carries out the reaction (2R)-2,3-dihydroxy-3-methylbutanoate + NADP(+) = (2S)-2-acetolactate + NADPH + H(+). The catalysed reaction is (2R,3R)-2,3-dihydroxy-3-methylpentanoate + NADP(+) = (S)-2-ethyl-2-hydroxy-3-oxobutanoate + NADPH + H(+). Its pathway is amino-acid biosynthesis; L-isoleucine biosynthesis; L-isoleucine from 2-oxobutanoate: step 2/4. It participates in amino-acid biosynthesis; L-valine biosynthesis; L-valine from pyruvate: step 2/4. In terms of biological role, involved in the biosynthesis of branched-chain amino acids (BCAA). Catalyzes an alkyl-migration followed by a ketol-acid reduction of (S)-2-acetolactate (S2AL) to yield (R)-2,3-dihydroxy-isovalerate. In the isomerase reaction, S2AL is rearranged via a Mg-dependent methyl migration to produce 3-hydroxy-3-methyl-2-ketobutyrate (HMKB). In the reductase reaction, this 2-ketoacid undergoes a metal-dependent reduction by NADPH to yield (R)-2,3-dihydroxy-isovalerate. The polypeptide is Ketol-acid reductoisomerase (NADP(+)) (Lachnoclostridium phytofermentans (strain ATCC 700394 / DSM 18823 / ISDg) (Clostridium phytofermentans)).